We begin with the raw amino-acid sequence, 329 residues long: Cytosolic arginine sensor for mTORC1 subunit 1 (329 aa).

A Phosphoserine modification is found at serine 14. 2 ACT domains span residues alanine 72–alanine 138 and glycine 260–glutamine 321. Residues serine 111–valine 112, glycine 274, isoleucine 280–valine 281, and threonine 300–aspartate 304 each bind L-arginine.

Belongs to the GATS family. As to quaternary structure, forms homodimers and heterodimers with CASTOR2. Interacts with the GATOR2 complex which is composed of MIOS, SEC13, SEH1L, WDR24 and WDR59; the interaction is negatively regulated by arginine. Interacts with TM4SF5; the interaction is positively regulated by leucine and is negatively regulated by arginine. Post-translationally, phosphorylation at Ser-14 by AKT1, promoting the interaction between CASTOR1 and RNF167. Ubiquitinated by RNF167 via 'Lys-29'-polyubiquitination, leading to its degradation, releasing the GATOR2 complex. Ubiquitination by RNF167 is promoted by phosphorylation at Ser-14 by AKT1.

It localises to the cytoplasm. The protein resides in the cytosol. In terms of biological role, functions as an intracellular arginine sensor within the amino acid-sensing branch of the TORC1 signaling pathway. As a homodimer or a heterodimer with CASTOR2, binds and inhibits the GATOR subcomplex GATOR2 and thereby mTORC1. Binding of arginine to CASTOR1 allosterically disrupts the interaction of CASTOR1-containing dimers with GATOR2 which can in turn activate mTORC1 and the TORC1 signaling pathway. The sequence is that of Cytosolic arginine sensor for mTORC1 subunit 1 from Pongo abelii (Sumatran orangutan).